A 100-amino-acid polypeptide reads, in one-letter code: Large ribosomal subunit protein uL23 (100 aa).

Belongs to the universal ribosomal protein uL23 family. As to quaternary structure, part of the 50S ribosomal subunit. Contacts protein L29, and trigger factor when it is bound to the ribosome.

In terms of biological role, one of the early assembly proteins it binds 23S rRNA. One of the proteins that surrounds the polypeptide exit tunnel on the outside of the ribosome. Forms the main docking site for trigger factor binding to the ribosome. The protein is Large ribosomal subunit protein uL23 of Mycolicibacterium vanbaalenii (strain DSM 7251 / JCM 13017 / BCRC 16820 / KCTC 9966 / NRRL B-24157 / PYR-1) (Mycobacterium vanbaalenii).